The following is a 582-amino-acid chain: Threonine--tRNA ligase (582 aa).

The segment at 185 to 478 (DHRKLGKELE…LTEQYGGAFP (294 aa)) is catalytic. Cys278, His329, and His455 together coordinate Zn(2+).

Belongs to the class-II aminoacyl-tRNA synthetase family. As to quaternary structure, homodimer. Zn(2+) serves as cofactor.

It is found in the cytoplasm. It catalyses the reaction tRNA(Thr) + L-threonine + ATP = L-threonyl-tRNA(Thr) + AMP + diphosphate + H(+). Catalyzes the attachment of threonine to tRNA(Thr) in a two-step reaction: L-threonine is first activated by ATP to form Thr-AMP and then transferred to the acceptor end of tRNA(Thr). Also edits incorrectly charged L-seryl-tRNA(Thr). The polypeptide is Threonine--tRNA ligase (Dehalococcoides mccartyi (strain ATCC BAA-2266 / KCTC 15142 / 195) (Dehalococcoides ethenogenes (strain 195))).